The following is an 88-amino-acid chain: Small ribosomal subunit protein bS20 (88 aa).

Residues 69-88 are disordered; it reads KNTASRKKSRLTKRFNKLTG. The span at 71–88 shows a compositional bias: basic residues; it reads TASRKKSRLTKRFNKLTG.

Belongs to the bacterial ribosomal protein bS20 family.

Functionally, binds directly to 16S ribosomal RNA. The chain is Small ribosomal subunit protein bS20 from Pelotomaculum thermopropionicum (strain DSM 13744 / JCM 10971 / SI).